We begin with the raw amino-acid sequence, 352 residues long: Photosystem II D2 protein (352 aa).

The helical transmembrane segment at 40 to 60 threads the bilayer; that stretch reads CAYMALGGWLTGTTFVTSWYT. Residue His-117 participates in chlorophyll a binding. A helical transmembrane segment spans residues 124–140; sequence GFMLRQFEIARLVGIRP. 2 residues coordinate pheophytin a: Gln-129 and Asn-142. Residues 152–165 traverse the membrane as a helical segment; it reads VFVSVFLMYPLGQS. A chlorophyll a-binding site is contributed by His-197. A helical transmembrane segment spans residues 207–227; sequence GALLCAIHGATVENTLFEDGD. Residues His-214 and Phe-261 each coordinate a plastoquinone. His-214 serves as a coordination point for Fe cation. His-268 provides a ligand contact to Fe cation. The chain crosses the membrane as a helical span at residues 278–294; that stretch reads GLWTSSIGIIGLALNLR.

It belongs to the reaction center PufL/M/PsbA/D family. In terms of assembly, PSII is composed of 1 copy each of membrane proteins PsbA, PsbB, PsbC, PsbD, PsbE, PsbF, PsbH, PsbI, PsbJ, PsbK, PsbL, PsbM, PsbT, PsbX, PsbY, PsbZ, Psb30/Ycf12, peripheral proteins PsbO, CyanoQ (PsbQ), PsbU, PsbV and a large number of cofactors. It forms dimeric complexes. Requires The D1/D2 heterodimer binds P680, chlorophylls that are the primary electron donor of PSII, and subsequent electron acceptors. It shares a non-heme iron and each subunit binds pheophytin, quinone, additional chlorophylls, carotenoids and lipids. There is also a Cl(-1) ion associated with D1 and D2, which is required for oxygen evolution. The PSII complex binds additional chlorophylls, carotenoids and specific lipids. as cofactor.

The protein localises to the cellular thylakoid membrane. The catalysed reaction is 2 a plastoquinone + 4 hnu + 2 H2O = 2 a plastoquinol + O2. Its function is as follows. Photosystem II (PSII) is a light-driven water:plastoquinone oxidoreductase that uses light energy to abstract electrons from H(2)O, generating O(2) and a proton gradient subsequently used for ATP formation. It consists of a core antenna complex that captures photons, and an electron transfer chain that converts photonic excitation into a charge separation. The D1/D2 (PsbA/PsbD) reaction center heterodimer binds P680, the primary electron donor of PSII as well as several subsequent electron acceptors. D2 is needed for assembly of a stable PSII complex. In Synechococcus sp. (strain RCC307), this protein is Photosystem II D2 protein.